The sequence spans 207 residues: Suppressor of IKBKE 1 (207 aa).

Coiled-coil stretches lie at residues 70–102 (HILL…DALE) and 162–193 (QFCK…SLQA).

The protein belongs to the SIKE family. As to quaternary structure, interacts with IKBKE and TBK1 via its coiled coil region. Interaction with TBK1 is disrupted upon viral infection or TLR3 stimulation. Interacts with CDC42BPB. Interacts with SIKE1 which mediates association with the STRIPAK core complex composed of PP2A catalytic and scaffolding subunits, the striatins (PP2A regulatory subunits), the striatin-associated proteins MOB4, STRIP1 and STRIP2, PDCD10 and members of the STE20 kinases, such as STK24 and STK26. In terms of tissue distribution, widely expressed. Expressed in brain, heart, skeletal muscle, colon, thymus, spleen, kidney, liver, small intestine, placenta, lung and leukocytes. Present in all cell lines tested (at protein level).

The protein resides in the cytoplasm. Physiological suppressor of IKK-epsilon and TBK1 that plays an inhibitory role in virus- and TLR3-triggered IRF3. Inhibits TLR3-mediated activation of interferon-stimulated response elements (ISRE) and the IFN-beta promoter. May act by disrupting the interactions of IKBKE or TBK1 with TICAM1/TRIF, IRF3 and RIGI. Does not inhibit NF-kappa-B activation pathways. Associates with the striatin-interacting phosphatase and kinase (STRIPAK) core complex, forming the extended (SIKE1:SLMAP)STRIPAK complex. The (SIKE1:SLMAP)STRIPAK complex dephosphorylates STK3 leading to the inhibition of Hippo signaling and the control of cell growth. The polypeptide is Suppressor of IKBKE 1 (Homo sapiens (Human)).